Here is a 366-residue protein sequence, read N- to C-terminus: uncharacterized protein (366 aa).

6 helical membrane passes run 30–50, 66–86, 136–156, 162–182, 198–218, and 225–245; these read FWTY…AVGI, IIIA…IIVI, IFIS…GYLA, IILF…LDLL, IGVV…IYDI, and YIPE…IIDV.

The protein localises to the cell membrane. This is an uncharacterized protein from Methanocaldococcus jannaschii (strain ATCC 43067 / DSM 2661 / JAL-1 / JCM 10045 / NBRC 100440) (Methanococcus jannaschii).